Reading from the N-terminus, the 643-residue chain is Threonine--tRNA ligase (643 aa).

Residues 1–61 form the TGS domain; that stretch reads MPIITLPDGS…SEDATLEIIT (61 aa). Positions 243 to 534 are catalytic; that stretch reads DHRKIGKALD…ITEEYAGFFP (292 aa). Zn(2+) contacts are provided by cysteine 334, histidine 385, and histidine 511.

Belongs to the class-II aminoacyl-tRNA synthetase family. In terms of assembly, homodimer. Requires Zn(2+) as cofactor.

Its subcellular location is the cytoplasm. It catalyses the reaction tRNA(Thr) + L-threonine + ATP = L-threonyl-tRNA(Thr) + AMP + diphosphate + H(+). Catalyzes the attachment of threonine to tRNA(Thr) in a two-step reaction: L-threonine is first activated by ATP to form Thr-AMP and then transferred to the acceptor end of tRNA(Thr). Also edits incorrectly charged L-seryl-tRNA(Thr). In Glaesserella parasuis serovar 5 (strain SH0165) (Haemophilus parasuis), this protein is Threonine--tRNA ligase.